Reading from the N-terminus, the 156-residue chain is 6,7-dimethyl-8-ribityllumazine synthase (156 aa).

5-amino-6-(D-ribitylamino)uracil is bound by residues F23, 57 to 59 (AYE), and 81 to 83 (AII). 86 to 87 (GT) contacts (2S)-2-hydroxy-3-oxobutyl phosphate. The Proton donor role is filled by H89. F114 contributes to the 5-amino-6-(D-ribitylamino)uracil binding site. R128 contributes to the (2S)-2-hydroxy-3-oxobutyl phosphate binding site.

The protein belongs to the DMRL synthase family.

The catalysed reaction is (2S)-2-hydroxy-3-oxobutyl phosphate + 5-amino-6-(D-ribitylamino)uracil = 6,7-dimethyl-8-(1-D-ribityl)lumazine + phosphate + 2 H2O + H(+). It functions in the pathway cofactor biosynthesis; riboflavin biosynthesis; riboflavin from 2-hydroxy-3-oxobutyl phosphate and 5-amino-6-(D-ribitylamino)uracil: step 1/2. In terms of biological role, catalyzes the formation of 6,7-dimethyl-8-ribityllumazine by condensation of 5-amino-6-(D-ribitylamino)uracil with 3,4-dihydroxy-2-butanone 4-phosphate. This is the penultimate step in the biosynthesis of riboflavin. The polypeptide is 6,7-dimethyl-8-ribityllumazine synthase (Helicobacter pylori (strain ATCC 700392 / 26695) (Campylobacter pylori)).